The primary structure comprises 715 residues: Fatty acid oxidation complex subunit alpha (715 aa).

The interval 1–194 (MHEQRAKPSA…RLGLVDDAVP (194 aa)) is enoyl-CoA hydratase. A 3-hydroxyacyl-CoA dehydrogenase region spans residues 310–715 (HALHRIGILG…QGERFYPQGS (406 aa)).

The protein in the N-terminal section; belongs to the enoyl-CoA hydratase/isomerase family. In the central section; belongs to the 3-hydroxyacyl-CoA dehydrogenase family. As to quaternary structure, heterotetramer of two alpha chains (FadJ) and two beta chains (FadI).

The protein localises to the cytoplasm. The catalysed reaction is a (3S)-3-hydroxyacyl-CoA = a (2E)-enoyl-CoA + H2O. The enzyme catalyses a 4-saturated-(3S)-3-hydroxyacyl-CoA = a (3E)-enoyl-CoA + H2O. It catalyses the reaction a (3S)-3-hydroxyacyl-CoA + NAD(+) = a 3-oxoacyl-CoA + NADH + H(+). It carries out the reaction (3S)-3-hydroxybutanoyl-CoA = (3R)-3-hydroxybutanoyl-CoA. It functions in the pathway lipid metabolism; fatty acid beta-oxidation. Its function is as follows. Catalyzes the formation of a hydroxyacyl-CoA by addition of water on enoyl-CoA. Also exhibits 3-hydroxyacyl-CoA epimerase and 3-hydroxyacyl-CoA dehydrogenase activities. The sequence is that of Fatty acid oxidation complex subunit alpha from Serratia proteamaculans (strain 568).